We begin with the raw amino-acid sequence, 235 residues long: Proteasome subunit beta type-1 (235 aa).

Residues 1-20 (MSRLGFEQFPDYQVPGMKHP) constitute a propeptide that is removed on maturation.

This sequence belongs to the peptidase T1B family. As to quaternary structure, the 26S proteasome consists of a 20S proteasome core and two 19S regulatory subunits. The 20S proteasome core is composed of 28 subunits that are arranged in four stacked rings, resulting in a barrel-shaped structure. The two end rings are each formed by seven alpha subunits, and the two central rings are each formed by seven beta subunits. The catalytic chamber with the active sites is on the inside of the barrel.

Its subcellular location is the cytoplasm. The protein resides in the nucleus. Non-catalytic component of the proteasome, a multicatalytic proteinase complex which is characterized by its ability to cleave peptides with Arg, Phe, Tyr, Leu, and Glu adjacent to the leaving group at neutral or slightly basic pH. The proteasome has an ATP-dependent proteolytic activity. This is Proteasome subunit beta type-1 (Prosbeta6) from Drosophila melanogaster (Fruit fly).